We begin with the raw amino-acid sequence, 258 residues long: MTKTRTLVLIPARMAATRLPGKPLLDIGGLPMVVHVLRRAETAGIGRVAVATDTPEIAAAVTAHGGEAIMTRADHPSGSDRVFEALDRLDPDGRIETIINLQGDFPTIRPDIIRDVLKPLADPAVDIATLAAEIHSDEEATNPNVVKAVGSPVAPRRLRALYFTRATAPHGDGPRYHHIGLYAYRRKALQRFVELPPSPLERQERLEQLRALEGGMRIDIMIVDDVPRGVDTAADLETARRILASVPIPKLAYPRSNL.

This sequence belongs to the KdsB family.

It is found in the cytoplasm. It carries out the reaction 3-deoxy-alpha-D-manno-oct-2-ulosonate + CTP = CMP-3-deoxy-beta-D-manno-octulosonate + diphosphate. The protein operates within nucleotide-sugar biosynthesis; CMP-3-deoxy-D-manno-octulosonate biosynthesis; CMP-3-deoxy-D-manno-octulosonate from 3-deoxy-D-manno-octulosonate and CTP: step 1/1. Its pathway is bacterial outer membrane biogenesis; lipopolysaccharide biosynthesis. Its function is as follows. Activates KDO (a required 8-carbon sugar) for incorporation into bacterial lipopolysaccharide in Gram-negative bacteria. The sequence is that of 3-deoxy-manno-octulosonate cytidylyltransferase from Nitrobacter hamburgensis (strain DSM 10229 / NCIMB 13809 / X14).